Reading from the N-terminus, the 275-residue chain is Hydroxyethylthiazole kinase (275 aa).

Methionine 53 is a substrate binding site. ATP contacts are provided by arginine 128 and serine 174. Glycine 201 is a binding site for substrate.

Belongs to the Thz kinase family. Requires Mg(2+) as cofactor.

The catalysed reaction is 5-(2-hydroxyethyl)-4-methylthiazole + ATP = 4-methyl-5-(2-phosphooxyethyl)-thiazole + ADP + H(+). Its pathway is cofactor biosynthesis; thiamine diphosphate biosynthesis; 4-methyl-5-(2-phosphoethyl)-thiazole from 5-(2-hydroxyethyl)-4-methylthiazole: step 1/1. In terms of biological role, catalyzes the phosphorylation of the hydroxyl group of 4-methyl-5-beta-hydroxyethylthiazole (THZ). This Kineococcus radiotolerans (strain ATCC BAA-149 / DSM 14245 / SRS30216) protein is Hydroxyethylthiazole kinase.